Here is a 122-residue protein sequence, read N- to C-terminus: Large ribosomal subunit protein uL14 (122 aa).

This sequence belongs to the universal ribosomal protein uL14 family. In terms of assembly, part of the 50S ribosomal subunit. Forms a cluster with proteins L3 and L19. In the 70S ribosome, L14 and L19 interact and together make contacts with the 16S rRNA in bridges B5 and B8.

Its function is as follows. Binds to 23S rRNA. Forms part of two intersubunit bridges in the 70S ribosome. This is Large ribosomal subunit protein uL14 from Trichormus variabilis (strain ATCC 29413 / PCC 7937) (Anabaena variabilis).